Here is a 291-residue protein sequence, read N- to C-terminus: MPGPMNKRDLEPGIITDLAGRTTYGDYLQLDRLLSAQVTRSQPPHHDELLFIIQHQTSELWMKLLIHELGACIRYVQADRLEPSFKIFARVAHIQRMLFEQWSVLETLTPNEYLEFRDTLGSSSGFQSFQYRAVEFLLGNKDAQALMPFRHVPAIHGELERLFESPSLYDEFLRHLSRMGHPVPQSHVQRDWRKPYEKSPEVVEVFRRIYQDAEAHWDAYEMCEKLVDTEERFQLWRYRHMMTVMRIIGFKQGTGGSSGVGFLRKALDLRFFPELWDVRTELTPPPPRHRP.

Residues Phe51–His55, Tyr113, and Arg117 contribute to the substrate site. His240 provides a ligand contact to heme. Thr254 is a binding site for substrate.

Belongs to the tryptophan 2,3-dioxygenase family. Homotetramer. The cofactor is heme.

The catalysed reaction is L-tryptophan + O2 = N-formyl-L-kynurenine. Its pathway is amino-acid degradation; L-tryptophan degradation via kynurenine pathway; L-kynurenine from L-tryptophan: step 1/2. In terms of biological role, heme-dependent dioxygenase that catalyzes the oxidative cleavage of the L-tryptophan (L-Trp) pyrrole ring and converts L-tryptophan to N-formyl-L-kynurenine. Catalyzes the oxidative cleavage of the indole moiety. In Myxococcus xanthus (strain DK1622), this protein is Tryptophan 2,3-dioxygenase.